We begin with the raw amino-acid sequence, 126 residues long: Nascent polypeptide-associated complex protein (126 aa).

Residues 10–77 (PRMMKQMQKM…AKKVAKEEEK (68 aa)) enclose the NAC-A/B domain.

This sequence belongs to the NAC-alpha family. As to quaternary structure, homodimer. Interacts with the ribosome. Binds ribosomal RNA.

Its function is as follows. Contacts the emerging nascent chain on the ribosome. This Methanococcus maripaludis (strain DSM 14266 / JCM 13030 / NBRC 101832 / S2 / LL) protein is Nascent polypeptide-associated complex protein.